A 702-amino-acid polypeptide reads, in one-letter code: Epsin-1 (702 aa).

Residues 10 to 142 (NFSKGYTDTQ…EDEHALKEAR (133 aa)) enclose the ENTH domain. Basic and acidic residues-rich tracts occupy residues 136–160 (HALK…SSRF) and 183–192 (SRYDDDDRDH). Residues 136–285 (HALKEARGDS…HQREREQQEQ (150 aa)) form a disordered region. Residues 193–214 (RSRRRSRSRRPGRSRSRRRSRR) show a composition bias toward basic residues. A phosphoserine mark is found at Ser212, Ser216, Ser218, and Ser223. UIM domains lie at 226-245 (ENDP…AEED) and 254-273 (DSEA…DEAR). Basic and acidic residues predominate over residues 230–248 (ELQRVIEESKRQAEEDAKR). A Phosphoserine modification is found at Ser255. Over residues 266–283 (SKEEDEARQRHQREREQQ) the composition is skewed to basic and acidic residues. Thr406 is modified (phosphothreonine). Disordered regions lie at residues 504 to 589 (NHTG…RTGD) and 683 to 702 (PMQG…LIDL). The segment covering 514–534 (TGLQRQTTGYTGNNNPYSRPL) has biased composition (polar residues). The span at 535–549 (QSQSTGILQQQQQQS) shows a compositional bias: low complexity. The span at 557-577 (KTGSNNPFAQFSNLPSQSTAP) shows a compositional bias: polar residues. Residues 683-695 (PMQGMQQQSMQPQ) show a composition bias toward low complexity.

This sequence belongs to the epsin family.

Its subcellular location is the cytoplasm. The protein localises to the membrane. Binds to membranes enriched in phosphatidylinositol 3,5-bisphosphate (PtdIns(3,5)P2) and phosphatidylinositol 4,5-bisphosphate (PtdIns(4,5)P2). Required for endocytosis and localization of actin. In Schizosaccharomyces pombe (strain 972 / ATCC 24843) (Fission yeast), this protein is Epsin-1 (ent1).